Consider the following 73-residue polypeptide: Kappa-scoloptoxin SsmTx-I (73 aa).

The N-terminal stretch at 1 to 25 (MMMMFSVVSVFLMLLLLKFHDLSMG) is a signal peptide. The propeptide occupies 26–37 (EEISLLKKVVRR). 2 cysteine pairs are disulfide-bonded: cysteine 45–cysteine 56 and cysteine 50–cysteine 63.

It belongs to the scoloptoxin-04 family. In terms of tissue distribution, expressed by the venom gland.

Its subcellular location is the secreted. In terms of biological role, exhibits highly specific blockage of Kv2.1/KCNB1 (IC(50)=41.7 nM) voltage-gated potassium channels. This blockage is not associated with a significant change in steady-state activation, suggesting that this toxin acts as a channel blocker rather than a gating-modifier. Shows potential analgesic activities in formalin-induced paw licking, thermal pain, and acetic acid-induced abdominal writhing mice models. This chain is Kappa-scoloptoxin SsmTx-I, found in Scolopendra mutilans (Chinese red-headed centipede).